Consider the following 327-residue polypeptide: S-adenosylmethionine/S-adenosylhomocysteine transporter (327 aa).

10 helical membrane-spanning segments follow: residues 22–42 (CDMA…SFAL), 53–73 (LFVT…LLLC), 85–105 (IMPI…LEFI), 114–134 (TACF…YVQL), 143–163 (LGGL…GGSE), 165–185 (VAEW…ATCL), 202–222 (SLSM…LSLI), 240–260 (LFLQ…YNLF), 271–291 (FLSF…WLLL), and 294–314 (SFPP…RLIY). The EamA 1 domain occupies 34-157 (FIWSSSFALS…LGLVSYLVYL (124 aa)). The EamA 2 domain maps to 189 to 313 (GWTLLRKLGR…GFMVLGCRLI (125 aa)).

It belongs to the drug/metabolite transporter (DMT) superfamily. 10 TMS drug/metabolite exporter (DME) (TC 2.A.7.3) family.

Its subcellular location is the cell membrane. CCCP treatment reduces SAM intracellular uptake by 50%. Its function is as follows. Transports S-adenosylmethionine (SAM) and S-adenosylhomocysteine (SAH). Allows bacteria to acquire SAM from the eukaryotic host cell and to likely remove the toxic by-product SAH. The sequence is that of S-adenosylmethionine/S-adenosylhomocysteine transporter from Chlamydia trachomatis serovar L2 (strain ATCC VR-902B / DSM 19102 / 434/Bu).